We begin with the raw amino-acid sequence, 487 residues long: b(0,+)-type amino acid transporter 1 (487 aa).

The interval 1-22 is disordered; that stretch reads MGETVPRRRREDEKSIQSDEPK. At 1–31 the chain is on the cytoplasmic side; it reads MGETVPRRRREDEKSIQSDEPKTTSLQKEVG. The residue at position 18 (Ser-18) is a Phosphoserine. A helical membrane pass occupies residues 32-55; the sequence is LISGICIIVGTIIGSGIFISPKSV. 43 to 47 lines the L-arginine pocket; the sequence is IIGSG. Over 56–62 the chain is Extracellular; sequence LSNTQAV. Residues 63-84 form a helical membrane-spanning segment; sequence GPCLIIWAACGVLGTLGALCFA. Residues 85-110 are Cytoplasmic-facing; the sequence is ELGTMITKSGGEYPYLMEAFGPIPAY. A helical membrane pass occupies residues 111 to 137; that stretch reads LFSWSSLLVMKPSSFAIICLSFSEYVA. Over 138–147 the chain is Extracellular; the sequence is TPFYSGCEPP. The next 2 membrane-spanning stretches (helical) occupy residues 148–169 and 170–193; these read KVVVKCLAAAAIMLITTVNSLS and VRLGSYVQNFFTAAKLVIVAIIII. Residues 194-217 are Extracellular-facing; it reads SGLVLLAQGNTKNFENSFEGAEVS. A helical membrane pass occupies residues 218 to 238; that stretch reads VGAISLALYNGLWAYDGWNQL. Asp-233 is a binding site for L-arginine. Over 239-251 the chain is Cytoplasmic; it reads NYITEELRNPFRN. The chain crosses the membrane as a helical span at residues 252–274; the sequence is LPLAIIFGIPLVTVCYILINISY. Residues 275–302 lie on the Extracellular side of the membrane; it reads FTVMTPTELLQSQAVAVTFGDRVLYPAS. Residues 303 to 325 form a helical membrane-spanning segment; sequence WIVPVFVAFSTIGAANGTCFTAG. Residues 326–351 lie on the Cytoplasmic side of the membrane; it reads RLVYVAGREGHMLKVLSYISVRRLTP. 2 helical membrane-spanning segments follow: residues 352–370 and 371–391; these read APAIIFYGIVATIYIIPGD and INSLVNYFSFATWLFYGLTIL. The Cytoplasmic segment spans residues 392 to 410; it reads GLIVMRFTRKELERPIKVP. The helical transmembrane segment at 411-431 threads the bilayer; sequence IFIPILVTFIAAFLVLAPVIT. Over 432–434 the chain is Extracellular; that stretch reads NPA. The helical transmembrane segment at 435–450 threads the bilayer; it reads WEYLYCVLFILSGLVF. Topologically, residues 451–487 are cytoplasmic; it reads YFLFVYYKFEWAQKISKPITMHLQMLMEVVPPEPDPK.

The protein belongs to the amino acid-polyamine-organocation (APC) superfamily. Disulfide-linked heterodimer composed of the catalytic light chain subunit SLC7A9 and the heavy chain subunit. The heterodimer is the minimal functional unit. Assembles in heterotetramers (dimers of heterodimers) and higher order oligomers. Interacts with CAV1. As to expression, kidney and small intestine.

It is found in the apical cell membrane. It catalyses the reaction L-leucine(out) + L-arginine(in) = L-leucine(in) + L-arginine(out). The enzyme catalyses L-histidine(out) + L-arginine(in) = L-histidine(in) + L-arginine(out). The catalysed reaction is L-arginine(in) + L-phenylalanine(out) = L-arginine(out) + L-phenylalanine(in). It carries out the reaction L-cysteine(out) + L-arginine(in) = L-cysteine(in) + L-arginine(out). It catalyses the reaction L-cystine(out) + L-arginine(in) = L-cystine(in) + L-arginine(out). The enzyme catalyses L-lysine(out) + L-arginine(in) = L-lysine(in) + L-arginine(out). In terms of biological role, mediates the electrogenic exchange between cationic amino acids and neutral amino acids, with a stoichiometry of 1:1. Has system b(0,+)-like activity with high affinity for extracellular cationic amino acids and L-cystine and lower affinity for intracellular neutral amino acids. Substrate exchange is driven by high concentration of intracellular neutral amino acids and the intracellular reduction of L-cystine to L-cysteine. Required for reabsorption of L-cystine and dibasic amino acids across the brush border membrane in renal proximal tubules. The chain is b(0,+)-type amino acid transporter 1 from Oryctolagus cuniculus (Rabbit).